The primary structure comprises 591 residues: Adenine deaminase (591 aa).

The protein belongs to the metallo-dependent hydrolases superfamily. Adenine deaminase family. As to quaternary structure, homodimer. The cofactor is Mn(2+).

The catalysed reaction is adenine + H2O + H(+) = hypoxanthine + NH4(+). The sequence is that of Adenine deaminase from Edwardsiella ictaluri (strain 93-146).